The following is a 561-amino-acid chain: uncharacterized protein (561 aa).

6 consecutive transmembrane segments (helical) span residues 10-29, 34-56, 63-80, 95-117, 122-144, and 164-186; these read LLRNNPEIALFLAIAIGYWI, FGSLQIGGVAGSLLAAVLISQIG, LKTVLFALFIYAVGFQSG, VLMAFVLAISGLFTVLAVARMFH, LAAGVAAGGLTQSAIIGTASSAL, and GYAVTYIFGSLAPIIICVNILPW. 2 consecutive RCK C-terminal domains span residues 205-287 and 294-376; these read QGMA…LLGE and HDMD…ELGS. 5 consecutive transmembrane segments (helical) span residues 386–403, 407–429, 442–464, 479–501, and 538–560; these read LVFHGVGLVVGLLIGLIV, GSIPLTLGSGGGALLSGLLFGWY, AASTLLVDFGLSGFVAVTGLQTG, FMLGVVVSIVPLIITMLFGRYVL, and SFAITYAIANVLLTLLGPLVVAF.

This sequence belongs to the AAE transporter (TC 2.A.81) family.

The protein localises to the cell membrane. This is an uncharacterized protein from Zymomonas mobilis subsp. mobilis (strain ATCC 31821 / ZM4 / CP4).